We begin with the raw amino-acid sequence, 126 residues long: C-type natriuretic peptide (126 aa).

A signal peptide spans 1-23 (MHLSQLIACALLLALLSLRPSEA). Residues 20 to 73 (PSEAKPGTPPKVPRTPPGEELADSQAAGGNQKKGDKTPGSGGANLKGDRSRLLR) are disordered. A propeptide spanning residues 24–73 (KPGTPPKVPRTPPGEELADSQAAGGNQKKGDKTPGSGGANLKGDRSRLLR) is cleaved from the precursor. A compositionally biased stretch (pro residues) spans 26–35 (GTPPKVPRTP). The cysteines at positions 110 and 126 are disulfide-linked.

Belongs to the natriuretic peptide family. In terms of processing, degraded by IDE (in vitro).

It is found in the secreted. In terms of biological role, hormone which plays a role in endochondral ossification through regulation of cartilaginous growth plate chondrocytes proliferation and differentiation. May also be vasoactive and natriuretic. Acts by specifically binding and stimulating NPR2 to produce cGMP. Binds the clearance receptor NPR3. In Mus musculus (Mouse), this protein is C-type natriuretic peptide (Nppc).